Here is a 337-residue protein sequence, read N- to C-terminus: ERI1 exoribonuclease 3 (337 aa).

In terms of domain architecture, Exonuclease spans 146 to 320; sequence FLVLDFEATC…DDCKNIANIM (175 aa). Mg(2+) is bound by residues D150, E152, and D249. Residue E152 is the Proton acceptor of the active site. Position 152 (E152) interacts with AMP. H307 acts as the Proton acceptor in catalysis. AMP is bound at residue H307. Mg(2+) is bound at residue D312.

As to quaternary structure, interacts with PRNP. The cofactor is Mg(2+).

The chain is ERI1 exoribonuclease 3 (ERI3) from Bos taurus (Bovine).